The primary structure comprises 329 residues: Putative L-ascorbate peroxidase 6 (329 aa).

The Proton acceptor role is filled by histidine 123. A heme b-binding site is contributed by histidine 244.

Belongs to the peroxidase family. Ascorbate peroxidase subfamily. The cofactor is heme b.

It carries out the reaction L-ascorbate + H2O2 = L-dehydroascorbate + 2 H2O. Functionally, plays a key role in hydrogen peroxide removal. The sequence is that of Putative L-ascorbate peroxidase 6 (APX6) from Arabidopsis thaliana (Mouse-ear cress).